We begin with the raw amino-acid sequence, 450 residues long: Glucose-6-phosphate isomerase (450 aa).

Residue T39 is modified to Phosphothreonine. Residue E291 is the Proton donor of the active site. Active-site residues include H312 and K426.

This sequence belongs to the GPI family.

The protein resides in the cytoplasm. The catalysed reaction is alpha-D-glucose 6-phosphate = beta-D-fructose 6-phosphate. The protein operates within carbohydrate biosynthesis; gluconeogenesis. It participates in carbohydrate degradation; glycolysis; D-glyceraldehyde 3-phosphate and glycerone phosphate from D-glucose: step 2/4. Functionally, catalyzes the reversible isomerization of glucose-6-phosphate to fructose-6-phosphate. The chain is Glucose-6-phosphate isomerase from Bacillus cytotoxicus (strain DSM 22905 / CIP 110041 / 391-98 / NVH 391-98).